A 75-amino-acid polypeptide reads, in one-letter code: Guanine nucleotide-binding protein G(I)/G(S)/G(O) subunit gamma-4 (75 aa).

Position 72 is a cysteine methyl ester (Cys72). A lipid anchor (S-geranylgeranyl cysteine) is attached at Cys72. Residues 73–75 (TIL) constitute a propeptide, removed in mature form.

The protein belongs to the G protein gamma family. In terms of assembly, g proteins are composed of 3 units, alpha, beta and gamma. Interacts with beta-1 and beta-2, but not with beta-3. Interacts with KCNK1. Interacts (via C-terminus) with KCNK2/TREK-1 (via N-terminus); this interaction confers ion selectivity to Cl(-) and L-glutamate. In terms of tissue distribution, brain, kidney, pancreas, skeletal muscle and faintly in cardiac muscle.

Its subcellular location is the cell membrane. Guanine nucleotide-binding proteins (G proteins) are involved as a modulator or transducer in various transmembrane signaling systems. The beta and gamma chains are required for the GTPase activity, for replacement of GDP by GTP, and for G protein-effector interaction. The polypeptide is Guanine nucleotide-binding protein G(I)/G(S)/G(O) subunit gamma-4 (GNG4) (Homo sapiens (Human)).